A 199-amino-acid polypeptide reads, in one-letter code: N-(5'-phosphoribosyl)anthranilate isomerase (199 aa).

This sequence belongs to the TrpF family.

It catalyses the reaction N-(5-phospho-beta-D-ribosyl)anthranilate = 1-(2-carboxyphenylamino)-1-deoxy-D-ribulose 5-phosphate. It participates in amino-acid biosynthesis; L-tryptophan biosynthesis; L-tryptophan from chorismate: step 3/5. The chain is N-(5'-phosphoribosyl)anthranilate isomerase from Solibacter usitatus (strain Ellin6076).